The primary structure comprises 36 residues: Pancreatic polypeptide (36 aa).

Tyr36 carries the post-translational modification Tyrosine amide.

The protein belongs to the NPY family.

The protein localises to the secreted. In terms of biological role, hormone secreted by pancreatic cells that acts as a regulator of pancreatic and gastrointestinal functions. The protein is Pancreatic polypeptide (PPY) of Struthio camelus (Common ostrich).